Here is a 410-residue protein sequence, read N- to C-terminus: L-sorbose 1-phosphate reductase (410 aa).

The Zn(2+) site is built by Cys-40, His-69, and Glu-70. NAD(+) is bound by residues Arg-221 and 309–310 (GT).

The protein belongs to the zinc-containing alcohol dehydrogenase family. Requires Zn(2+) as cofactor.

In terms of biological role, reduces L-sorbose 1-phosphate to D-glucitol 6-phosphate. This Klebsiella pneumoniae protein is L-sorbose 1-phosphate reductase (sorE).